A 75-amino-acid polypeptide reads, in one-letter code: U9-theraphotoxin-Cg1a (75 aa).

Positions 1–21 are cleaved as a signal peptide; sequence MKTLVLFIIFGLAALFLLSSA. Positions 22–29 are excised as a propeptide; the sequence is NELEETER. Disulfide bonds link C31/C46, C38/C51, and C45/C58.

The protein belongs to the neurotoxin 10 (Hwtx-1) family. 43 (Jztx-49) subfamily. Expressed by the venom gland.

It is found in the secreted. Functionally, probable ion channel inhibitor. The polypeptide is U9-theraphotoxin-Cg1a (Chilobrachys guangxiensis (Chinese earth tiger tarantula)).